Consider the following 392-residue polypeptide: Formate-dependent phosphoribosylglycinamide formyltransferase (392 aa).

N(1)-(5-phospho-beta-D-ribosyl)glycinamide is bound by residues 15-16 and E75; that span reads EL. ATP is bound by residues R107, K148, 153-158, 188-191, and E196; these read SSGKGQ and EEFL. One can recognise an ATP-grasp domain in the interval 112-302; it reads DLASGELGLH…EFELHLRAVL (191 aa). Residues E261 and E273 each contribute to the Mg(2+) site. N(1)-(5-phospho-beta-D-ribosyl)glycinamide is bound by residues D280, K350, and 357–358; that span reads RR.

It belongs to the PurK/PurT family. As to quaternary structure, homodimer.

It catalyses the reaction N(1)-(5-phospho-beta-D-ribosyl)glycinamide + formate + ATP = N(2)-formyl-N(1)-(5-phospho-beta-D-ribosyl)glycinamide + ADP + phosphate + H(+). It functions in the pathway purine metabolism; IMP biosynthesis via de novo pathway; N(2)-formyl-N(1)-(5-phospho-D-ribosyl)glycinamide from N(1)-(5-phospho-D-ribosyl)glycinamide (formate route): step 1/1. In terms of biological role, involved in the de novo purine biosynthesis. Catalyzes the transfer of formate to 5-phospho-ribosyl-glycinamide (GAR), producing 5-phospho-ribosyl-N-formylglycinamide (FGAR). Formate is provided by PurU via hydrolysis of 10-formyl-tetrahydrofolate. This Synechococcus sp. (strain CC9902) protein is Formate-dependent phosphoribosylglycinamide formyltransferase.